Reading from the N-terminus, the 422-residue chain is G-protein coupled receptor 151 protein (422 aa).

The Extracellular portion of the chain corresponds to 1–45; it reads MGKAMLRAGFADTNSSNMNESFARLHFAGGYLPSDSKDWRTIIPS. 2 N-linked (GlcNAc...) asparagine glycosylation sites follow: Asn-14 and Asn-19. Residues 46–66 traverse the membrane as a helical segment; the sequence is LLMAVCLVGLVGNLCVIGILL. Topologically, residues 67–76 are cytoplasmic; sequence HGVWKRKPST. A helical transmembrane segment spans residues 77-97; it reads IHSLILNLSLADFSLLLFSAP. The Extracellular segment spans residues 98–123; sequence VRAAAYSKGVWDLGWFICKSSDWFTH. Cys-115 and Cys-191 form a disulfide bridge. A helical membrane pass occupies residues 124 to 144; sequence VCMAAKSLTFVVVAKACFAYA. At 145-157 the chain is on the cytoplasmic side; the sequence is SDPAKQESIHSRT. The chain crosses the membrane as a helical span at residues 158–178; that stretch reads IWSVLAGIWVVASLLPLPEWL. Over 179–205 the chain is Extracellular; sequence FSTTRRHAGVEMCLVDVPAVAEEFMSM. A helical transmembrane segment spans residues 206-226; sequence FGKLYPLLVFCLPLLLAGVYF. The Cytoplasmic segment spans residues 227–259; sequence WRAYDQCKTRCTKTRNLRDQMRSKQLTVMLLST. Residues 260–280 traverse the membrane as a helical segment; sequence AIISALLWLPEWIAWLWVWHV. The Extracellular portion of the chain corresponds to 281–290; that stretch reads KAGGPMPPQG. Residues 291-311 form a helical membrane-spanning segment; sequence FIALSQVLMFFTSTANPLIFL. The Cytoplasmic portion of the chain corresponds to 312–422; it reads VMSEEFKAGL…HEGQETEGCN (111 aa). A disordered region spans residues 339-422; sequence VQEAPAGNTE…HEGQETEGCN (84 aa). Positions 366-380 are enriched in basic and acidic residues; the sequence is TDGRGSPDDSKEKSG.

As to expression, high expression in the brain and lower levels in kidney and liver. In the nervous system expressed specifically in the habenular area (at protein level).

Its subcellular location is the cell membrane. Its function is as follows. Proton-sensing G-protein coupled receptor. This chain is G-protein coupled receptor 151 protein (Gpr151), found in Mus musculus (Mouse).